A 100-amino-acid polypeptide reads, in one-letter code: Small ribosomal subunit protein bS20 (100 aa).

The protein belongs to the bacterial ribosomal protein bS20 family.

Binds directly to 16S ribosomal RNA. This is Small ribosomal subunit protein bS20 from Prochlorococcus marinus (strain MIT 9211).